The primary structure comprises 149 residues: D-aminoacyl-tRNA deacylase (149 aa).

The Gly-cisPro motif, important for rejection of L-amino acids motif lies at 137-138 (GP).

It belongs to the DTD family. In terms of assembly, homodimer.

It is found in the cytoplasm. The catalysed reaction is glycyl-tRNA(Ala) + H2O = tRNA(Ala) + glycine + H(+). The enzyme catalyses a D-aminoacyl-tRNA + H2O = a tRNA + a D-alpha-amino acid + H(+). In terms of biological role, an aminoacyl-tRNA editing enzyme that deacylates mischarged D-aminoacyl-tRNAs. Also deacylates mischarged glycyl-tRNA(Ala), protecting cells against glycine mischarging by AlaRS. Acts via tRNA-based rather than protein-based catalysis; rejects L-amino acids rather than detecting D-amino acids in the active site. By recycling D-aminoacyl-tRNA to D-amino acids and free tRNA molecules, this enzyme counteracts the toxicity associated with the formation of D-aminoacyl-tRNA entities in vivo and helps enforce protein L-homochirality. This is D-aminoacyl-tRNA deacylase from Syntrophus aciditrophicus (strain SB).